Here is a 293-residue protein sequence, read N- to C-terminus: Acetylglutamate kinase (293 aa).

Residues 68–69 (GG), R90, and N189 contribute to the substrate site.

It belongs to the acetylglutamate kinase family. ArgB subfamily.

The protein localises to the cytoplasm. It catalyses the reaction N-acetyl-L-glutamate + ATP = N-acetyl-L-glutamyl 5-phosphate + ADP. The protein operates within amino-acid biosynthesis; L-arginine biosynthesis; N(2)-acetyl-L-ornithine from L-glutamate: step 2/4. Its function is as follows. Catalyzes the ATP-dependent phosphorylation of N-acetyl-L-glutamate. This Caldicellulosiruptor bescii (strain ATCC BAA-1888 / DSM 6725 / KCTC 15123 / Z-1320) (Anaerocellum thermophilum) protein is Acetylglutamate kinase.